Here is a 480-residue protein sequence, read N- to C-terminus: UDP-N-acetylmuramate--L-alanine ligase (480 aa).

ATP is bound at residue 122-128 (GTHGKTT).

The protein belongs to the MurCDEF family.

The protein localises to the cytoplasm. It catalyses the reaction UDP-N-acetyl-alpha-D-muramate + L-alanine + ATP = UDP-N-acetyl-alpha-D-muramoyl-L-alanine + ADP + phosphate + H(+). It functions in the pathway cell wall biogenesis; peptidoglycan biosynthesis. Its function is as follows. Cell wall formation. This Pseudomonas paraeruginosa (strain DSM 24068 / PA7) (Pseudomonas aeruginosa (strain PA7)) protein is UDP-N-acetylmuramate--L-alanine ligase.